A 74-amino-acid polypeptide reads, in one-letter code: Lantibiotic lichenicidin A1 (74 aa).

Positions 1-42 (MSKKEMILSWKNPMYRTESSYHPAGNILKELQEEEQHSIAGG) are excised as a propeptide. T43 carries the post-translational modification 2-oxobutanoic acid. A cross-link (beta-methyllanthionine (Thr-Cys)) is located at residues 45 to 49 (TLSTC). S47 carries the post-translational modification 2,3-didehydroalanine (Ser). T48 is modified ((Z)-2,3-didehydrobutyrine). A cross-link (lanthionine (Ser-Cys)) is located at residues 53-63 (SKPLGNNGYLC). 2 consecutive cross-links (beta-methyllanthionine (Thr-Cys)) follow at residues 64-69 (TVTKEC) and 66-73 (TKECMPSC).

In terms of processing, maturation of lantibiotics involves the enzymatic conversion of Thr, and Ser into dehydrated AA and the formation of thioether bonds with cysteine. This is followed by membrane translocation and cleavage of the modified precursor.

Its subcellular location is the secreted. It localises to the cell wall. Lanthionine-containing peptide antibiotic (lantibiotic) active on Gram-positive bacteria. The bactericidal activity of lantibiotics is based on depolarization of energized bacterial cytoplasmic membranes, initiated by the formation of aqueous transmembrane pores. When present individually, LchA1 exhibits activity towards L.lactis HP. When combined with LchA2, it displays activity towards a broad spectrum of non-pathogenic and pathogenic Gram-positive bacteria including strains of L.monocytogenes, methicillin-resistant S.aureus, S.pneumoniae and strains of vancomycin-resistant enterococci, but not towards E.faecium L4001 and BM4147-1. Combined LchA1 and LchA2 peptides also inhibit Bacillus sp. HIL-Y85/54728, L.lactis DPC3417 and B.halodurans C-125, which produce lantibiotics themselves. Inactivated by proteinase K and pronase E, but not by trypsin and chymotrypsin. This Bacillus licheniformis (strain ATCC 14580 / DSM 13 / JCM 2505 / CCUG 7422 / NBRC 12200 / NCIMB 9375 / NCTC 10341 / NRRL NRS-1264 / Gibson 46) protein is Lantibiotic lichenicidin A1.